Consider the following 525-residue polypeptide: MTENIHKHRILILDFGSQYTQLVARRVRELGVYCELWAWDVTEAQIREFNPSGIILSGGPESTTEDNSPRAPQYVFEAGVPVFGVCYGMQTMAMQLGGHVEASNEREFGYAQVEVLTDSALVRGIEDSLTADGKPLLDVWMSHGDKVTAIPSDFVTVASTETCPFAIMANEEKRFYGVQFHPEVTHTRQGMRMLDRFVRDICQCEALWTPAKIIDDAIARIRQQVGDDKVILGLSGGVDSSVTAMLLHRAIGKNLTCVFVDNGLLRLNEAEQVMDMFGDHFGLNIVHVEGEERFLTALAGENDPEAKRKIIGRVFVEVFDEQALRLEDVKWLAQGTIYPDVIESAASATGKAHVIKSHHNVGGLPKEMKMGLVEPLRELFKDEVRKIGLELGLPYDMLYRHPFPGPGLGVRVLGEVKKEYCDLLRRADAIFIEELHKADLYNKVSQAFTVFLPVRSVGVMGDGRKYDWVVSLRAVETIDFMTAHWAHLPYDFLGRVSNRIINEVNGISRVVYDISGKPPATIEWE.

Residues 9–207 (RILILDFGSQ…VRDICQCEAL (199 aa)) form the Glutamine amidotransferase type-1 domain. Cysteine 86 (nucleophile) is an active-site residue. Catalysis depends on residues histidine 181 and glutamate 183. A GMPS ATP-PPase domain is found at 208–400 (WTPAKIIDDA…LGLPYDMLYR (193 aa)). 235–241 (SGGVDSS) lines the ATP pocket.

In terms of assembly, homodimer.

The catalysed reaction is XMP + L-glutamine + ATP + H2O = GMP + L-glutamate + AMP + diphosphate + 2 H(+). The protein operates within purine metabolism; GMP biosynthesis; GMP from XMP (L-Gln route): step 1/1. In terms of biological role, catalyzes the synthesis of GMP from XMP. This chain is GMP synthase [glutamine-hydrolyzing], found in Enterobacter sp. (strain 638).